A 373-amino-acid chain; its full sequence is Chaperone protein DnaJ (373 aa).

In terms of domain architecture, J spans 5-70 (DYYEVLGVHR…QQRVIYDQYG (66 aa)). A CR-type zinc finger spans residues 136–214 (GLETKIQIPR…CHGSGRVRGK (79 aa)). 8 residues coordinate Zn(2+): Cys-149, Cys-152, Cys-166, Cys-169, Cys-188, Cys-191, Cys-202, and Cys-205. 4 CXXCXGXG motif repeats span residues 149–156 (CGTCDGIG), 166–173 (CPTCQGAG), 188–195 (CPECNGEG), and 202–209 (CEECHGSG).

It belongs to the DnaJ family. As to quaternary structure, homodimer. Zn(2+) is required as a cofactor.

It is found in the cytoplasm. Participates actively in the response to hyperosmotic and heat shock by preventing the aggregation of stress-denatured proteins and by disaggregating proteins, also in an autonomous, DnaK-independent fashion. Unfolded proteins bind initially to DnaJ; upon interaction with the DnaJ-bound protein, DnaK hydrolyzes its bound ATP, resulting in the formation of a stable complex. GrpE releases ADP from DnaK; ATP binding to DnaK triggers the release of the substrate protein, thus completing the reaction cycle. Several rounds of ATP-dependent interactions between DnaJ, DnaK and GrpE are required for fully efficient folding. Also involved, together with DnaK and GrpE, in the DNA replication of plasmids through activation of initiation proteins. The chain is Chaperone protein DnaJ from Syntrophotalea carbinolica (strain DSM 2380 / NBRC 103641 / GraBd1) (Pelobacter carbinolicus).